A 347-amino-acid chain; its full sequence is Probable dual-specificity RNA methyltransferase RlmN (347 aa).

Residue E93 is the Proton acceptor of the active site. In terms of domain architecture, Radical SAM core spans 99 to 333 (TEKRLTACLS…VSLRKSRGLD (235 aa)). Residues C106 and C338 are joined by a disulfide bond. 3 residues coordinate [4Fe-4S] cluster: C113, C117, and C120. S-adenosyl-L-methionine-binding positions include 160-161 (GE), S190, 219-221 (SLH), and N295. The active-site S-methylcysteine intermediate is the C338.

This sequence belongs to the radical SAM superfamily. RlmN family. [4Fe-4S] cluster serves as cofactor.

It is found in the cytoplasm. The catalysed reaction is adenosine(2503) in 23S rRNA + 2 reduced [2Fe-2S]-[ferredoxin] + 2 S-adenosyl-L-methionine = 2-methyladenosine(2503) in 23S rRNA + 5'-deoxyadenosine + L-methionine + 2 oxidized [2Fe-2S]-[ferredoxin] + S-adenosyl-L-homocysteine. The enzyme catalyses adenosine(37) in tRNA + 2 reduced [2Fe-2S]-[ferredoxin] + 2 S-adenosyl-L-methionine = 2-methyladenosine(37) in tRNA + 5'-deoxyadenosine + L-methionine + 2 oxidized [2Fe-2S]-[ferredoxin] + S-adenosyl-L-homocysteine. Functionally, specifically methylates position 2 of adenine 2503 in 23S rRNA and position 2 of adenine 37 in tRNAs. In Prochlorococcus marinus (strain MIT 9301), this protein is Probable dual-specificity RNA methyltransferase RlmN.